The primary structure comprises 608 residues: Protein transport protein SEC9 (608 aa).

Disordered regions lie at residues 1–23 and 50–307; these read MGFKKMFKKKDPTESEIRESMQD and VTQK…QTAA. Residues 9–21 are compositionally biased toward basic and acidic residues; that stretch reads KKDPTESEIRESM. 2 stretches are compositionally biased toward low complexity: residues 54–67 and 74–85; these read SSAAPPAARSNPYA and SGGNPYAAAAAG. Residues 100-121 are compositionally biased toward gly residues; that stretch reads NGGGGNGGSNSNGGSNSNGGSN. The span at 122–134 shows a compositional bias: low complexity; that stretch reads GSPYKMNNGGNNA. Residues 169 to 183 show a composition bias toward basic and acidic residues; sequence SKKEEAPPPLEDPRL. Residues 198 to 215 are compositionally biased toward acidic residues; that stretch reads ERDDYEPVYDVGLPEEPE. Over residues 241–260 the composition is skewed to basic and acidic residues; that stretch reads NVDRELEEDKTALFGPRDDP. The region spanning 390-452 is the t-SNARE coiled-coil homology 1 domain; it reads RFTKQQSAAS…KIAEDKAKEL (63 aa). Positions 514 to 533 are disordered; that stretch reads GEKSKHRKEMMSKYGSRPGR. The 63-residue stretch at 545-607 folds into the t-SNARE coiled-coil homology 2 domain; it reads DILEDEIDNN…HLNTARLAGI (63 aa).

It belongs to the SNAP-25 family.

The protein is Protein transport protein SEC9 (SEC9) of Yarrowia lipolytica (strain CLIB 122 / E 150) (Yeast).